A 434-amino-acid chain; its full sequence is Glutamyl-tRNA reductase 2 (434 aa).

Residues 57–60, serine 113, 118–120, and glutamine 124 each bind substrate; these read TCNR and DFE. The active-site Nucleophile is cysteine 58. 193–198 serves as a coordination point for NADP(+); the sequence is GTGKIG.

Belongs to the glutamyl-tRNA reductase family. Homodimer.

The enzyme catalyses (S)-4-amino-5-oxopentanoate + tRNA(Glu) + NADP(+) = L-glutamyl-tRNA(Glu) + NADPH + H(+). Its pathway is porphyrin-containing compound metabolism; protoporphyrin-IX biosynthesis; 5-aminolevulinate from L-glutamyl-tRNA(Glu): step 1/2. Catalyzes the NADPH-dependent reduction of glutamyl-tRNA(Glu) to glutamate 1-semialdehyde (GSA). The polypeptide is Glutamyl-tRNA reductase 2 (Flavobacterium johnsoniae (strain ATCC 17061 / DSM 2064 / JCM 8514 / BCRC 14874 / CCUG 350202 / NBRC 14942 / NCIMB 11054 / UW101) (Cytophaga johnsonae)).